The chain runs to 266 residues: Undecaprenyl-diphosphatase (266 aa).

A run of 8 helical transmembrane segments spans residues 1-21 (MVVI…SSTG), 43-63 (FLII…WKDI), 81-101 (LKII…DDII), 109-129 (VLIV…IEVV), 159-179 (LAMI…LLLG), 183-203 (PLAA…ATAL), 219-239 (YLAL…KWFM), and 246-266 (SFAS…VLLY).

The protein belongs to the UppP family.

The protein localises to the cell inner membrane. It carries out the reaction di-trans,octa-cis-undecaprenyl diphosphate + H2O = di-trans,octa-cis-undecaprenyl phosphate + phosphate + H(+). In terms of biological role, catalyzes the dephosphorylation of undecaprenyl diphosphate (UPP). Confers resistance to bacitracin. This chain is Undecaprenyl-diphosphatase, found in Fusobacterium nucleatum subsp. nucleatum (strain ATCC 25586 / DSM 15643 / BCRC 10681 / CIP 101130 / JCM 8532 / KCTC 2640 / LMG 13131 / VPI 4355).